Here is a 302-residue protein sequence, read N- to C-terminus: Sulfate adenylyltransferase subunit 2 (302 aa).

It belongs to the PAPS reductase family. CysD subfamily. In terms of assembly, heterodimer composed of CysD, the smaller subunit, and CysN.

The enzyme catalyses sulfate + ATP + H(+) = adenosine 5'-phosphosulfate + diphosphate. The protein operates within sulfur metabolism; hydrogen sulfide biosynthesis; sulfite from sulfate: step 1/3. In terms of biological role, with CysN forms the ATP sulfurylase (ATPS) that catalyzes the adenylation of sulfate producing adenosine 5'-phosphosulfate (APS) and diphosphate, the first enzymatic step in sulfur assimilation pathway. APS synthesis involves the formation of a high-energy phosphoric-sulfuric acid anhydride bond driven by GTP hydrolysis by CysN coupled to ATP hydrolysis by CysD. The polypeptide is Sulfate adenylyltransferase subunit 2 (Yersinia enterocolitica serotype O:8 / biotype 1B (strain NCTC 13174 / 8081)).